The chain runs to 450 residues: MERTTIMTLDFSKPGEAGYQSGFANEFATEALPGALPHARNSPQRAPYGLYAEQFSGTAFTAPRGHNRRSWLYRIRPAAVHRPFELVSGERRIVAEFGDSDDVPPTPPNQLRWDPLPMPAQPTDFVDGWVTMAGNGSAAAMSGCAIHLYAANRSMRERFFYSADGELLIVPQEGRLFIMTELGRLDVEPFEIAVIPRGVRFAVALPDGRARGYVCENFGALLRLPDLGPIGSNGLANPRDFLTPHASYEDREGAFELVAKLNGRLWRADIDHSPFDVVAWHGNYAPYKYDLRHFNTIGSISYDHPDPSIFLVLQSQSDTPGVDAIDFVIFPPRWLAAEDTFRPPWFHRNVASEFMGLVHGVYDAKAEGFVPGGASLHNCMSGHGPDADTFEKASSIDTSKPNKVGDTMAFMFETRTLIRPTRFALDTAQLQANYFECWQGLKKHFNPEQR.

His-304 functions as the Proton acceptor in the catalytic mechanism. The Fe cation site is built by His-347 and Glu-353. Residues Tyr-362 and His-383 each coordinate homogentisate. His-383 serves as a coordination point for Fe cation.

This sequence belongs to the homogentisate dioxygenase family. As to quaternary structure, hexamer; dimer of trimers. It depends on Fe cation as a cofactor.

It catalyses the reaction homogentisate + O2 = 4-maleylacetoacetate + H(+). It participates in amino-acid degradation; L-phenylalanine degradation; acetoacetate and fumarate from L-phenylalanine: step 4/6. Functionally, involved in the catabolism of homogentisate (2,5-dihydroxyphenylacetate or 2,5-OH-PhAc), a central intermediate in the degradation of phenylalanine and tyrosine. Catalyzes the oxidative ring cleavage of the aromatic ring of homogentisate to yield maleylacetoacetate. This chain is Homogentisate 1,2-dioxygenase, found in Burkholderia mallei (strain NCTC 10229).